Consider the following 378-residue polypeptide: MTADTTAVSVVASATRLVAKVGSSLVTNEGRGLDRAAVAHWAAQIAALRQQGKQVVLVSSGAIAEGMARLGWRKRPSVMHELQAAAAVGQMGLCQAYEAAFAEHGLRTAQILLTHEDLADRHRYLNARSTLFALMRLGVVPIVNENDTVVTDEIRLGDNDTLGALVTNLIEADALVILTDQRGLYDSDPRKNPDAVFVAHAQAGDPELEAMAGGAGSGIGTGGMLTKILAAKRAAHSGAHTVIASGRERNVLTRLAQGECIGTELRAVLPVWSARKQWLADHLRLRGRVVLDAGAVRALLHEGKSLLPIGVIDVQGEFERGDVVACIDPQGAECARGLINYSSADTRRILRQPSSQIARILGSMTDPELMHRDNLVVI.

ATP is bound at residue Lys20. Substrate-binding residues include Ser60, Asp147, and Asn159. Residues 179–180 and 221–227 contribute to the ATP site; these read TD and TGGMLTK. Positions 286–364 constitute a PUA domain; it reads RGRVVLDAGA…SQIARILGSM (79 aa).

This sequence belongs to the glutamate 5-kinase family.

The protein localises to the cytoplasm. It catalyses the reaction L-glutamate + ATP = L-glutamyl 5-phosphate + ADP. Its pathway is amino-acid biosynthesis; L-proline biosynthesis; L-glutamate 5-semialdehyde from L-glutamate: step 1/2. In terms of biological role, catalyzes the transfer of a phosphate group to glutamate to form L-glutamate 5-phosphate. This chain is Glutamate 5-kinase, found in Bordetella petrii (strain ATCC BAA-461 / DSM 12804 / CCUG 43448).